The following is a 249-amino-acid chain: Imidazole glycerol phosphate synthase subunit HisF (249 aa).

Active-site residues include Asp-11 and Asp-130.

This sequence belongs to the HisA/HisF family. Heterodimer of HisH and HisF.

The protein localises to the cytoplasm. It carries out the reaction 5-[(5-phospho-1-deoxy-D-ribulos-1-ylimino)methylamino]-1-(5-phospho-beta-D-ribosyl)imidazole-4-carboxamide + L-glutamine = D-erythro-1-(imidazol-4-yl)glycerol 3-phosphate + 5-amino-1-(5-phospho-beta-D-ribosyl)imidazole-4-carboxamide + L-glutamate + H(+). Its pathway is amino-acid biosynthesis; L-histidine biosynthesis; L-histidine from 5-phospho-alpha-D-ribose 1-diphosphate: step 5/9. IGPS catalyzes the conversion of PRFAR and glutamine to IGP, AICAR and glutamate. The HisF subunit catalyzes the cyclization activity that produces IGP and AICAR from PRFAR using the ammonia provided by the HisH subunit. The chain is Imidazole glycerol phosphate synthase subunit HisF from Exiguobacterium sibiricum (strain DSM 17290 / CCUG 55495 / CIP 109462 / JCM 13490 / 255-15).